We begin with the raw amino-acid sequence, 474 residues long: tRNA-2-methylthio-N(6)-dimethylallyladenosine synthase (474 aa).

The MTTase N-terminal domain maps to 3 to 120; that stretch reads KKLHIKTWGC…LPEMINSVRG (118 aa). [4Fe-4S] cluster-binding residues include Cys-12, Cys-49, Cys-83, Cys-157, Cys-161, and Cys-164. Positions 143–375 constitute a Radical SAM core domain; sequence RADGPTAFVS…QDRINQQTTA (233 aa). Positions 378–441 constitute a TRAM domain; that stretch reads RRKLGTVQRI…ANSLRGMLLR (64 aa).

It belongs to the methylthiotransferase family. MiaB subfamily. Monomer. [4Fe-4S] cluster is required as a cofactor.

It is found in the cytoplasm. The catalysed reaction is N(6)-dimethylallyladenosine(37) in tRNA + (sulfur carrier)-SH + AH2 + 2 S-adenosyl-L-methionine = 2-methylsulfanyl-N(6)-dimethylallyladenosine(37) in tRNA + (sulfur carrier)-H + 5'-deoxyadenosine + L-methionine + A + S-adenosyl-L-homocysteine + 2 H(+). Functionally, catalyzes the methylthiolation of N6-(dimethylallyl)adenosine (i(6)A), leading to the formation of 2-methylthio-N6-(dimethylallyl)adenosine (ms(2)i(6)A) at position 37 in tRNAs that read codons beginning with uridine. In Erwinia tasmaniensis (strain DSM 17950 / CFBP 7177 / CIP 109463 / NCPPB 4357 / Et1/99), this protein is tRNA-2-methylthio-N(6)-dimethylallyladenosine synthase.